A 729-amino-acid chain; its full sequence is Polyribonucleotide nucleotidyltransferase (729 aa).

Asp-485 and Asp-491 together coordinate Mg(2+). Residues 552 to 611 (PRITTMKVAEDKIRTIIGKGGATIKGLIESTGVSIDIDDSGVVQLFSPDKMALEEAQKQI) enclose the KH domain. In terms of domain architecture, S1 motif spans 621–689 (GQTYQGKVSK…KQGRVKLEWK (69 aa)).

It belongs to the polyribonucleotide nucleotidyltransferase family. Component of the RNA degradosome, which is a multiprotein complex involved in RNA processing and mRNA degradation. Mg(2+) is required as a cofactor.

It localises to the cytoplasm. The enzyme catalyses RNA(n+1) + phosphate = RNA(n) + a ribonucleoside 5'-diphosphate. Involved in mRNA degradation. Catalyzes the phosphorolysis of single-stranded polyribonucleotides processively in the 3'- to 5'-direction. The chain is Polyribonucleotide nucleotidyltransferase from Legionella pneumophila subsp. pneumophila (strain Philadelphia 1 / ATCC 33152 / DSM 7513).